The chain runs to 412 residues: Argininosuccinate synthase (412 aa).

Residues 15–23 and Ala42 each bind ATP; that span reads AYSGGLDTS. Residues Tyr93 and Ser98 each contribute to the L-citrulline site. An ATP-binding site is contributed by Gly123. The L-aspartate site is built by Thr125, Asn129, and Asp130. Asn129 serves as a coordination point for L-citrulline. The L-citrulline site is built by Arg133, Ser185, Ser194, Glu270, and Tyr282.

This sequence belongs to the argininosuccinate synthase family. Type 1 subfamily. Homotetramer.

Its subcellular location is the cytoplasm. The enzyme catalyses L-citrulline + L-aspartate + ATP = 2-(N(omega)-L-arginino)succinate + AMP + diphosphate + H(+). Its pathway is amino-acid biosynthesis; L-arginine biosynthesis; L-arginine from L-ornithine and carbamoyl phosphate: step 2/3. The polypeptide is Argininosuccinate synthase (Psychrobacter arcticus (strain DSM 17307 / VKM B-2377 / 273-4)).